The primary structure comprises 372 residues: Dual-specificity RNA methyltransferase RlmN (372 aa).

Glu94 serves as the catalytic Proton acceptor. Residues 100 to 339 (DGDRATLCVS…VTIRKTRGDD (240 aa)) enclose the Radical SAM core domain. Cysteines 107 and 344 form a disulfide. The [4Fe-4S] cluster site is built by Cys114, Cys118, and Cys121. Residues 168–169 (GE), Ser200, 222–224 (SLH), and Asn301 each bind S-adenosyl-L-methionine. Cys344 acts as the S-methylcysteine intermediate in catalysis.

The protein belongs to the radical SAM superfamily. RlmN family. The cofactor is [4Fe-4S] cluster.

It localises to the cytoplasm. The catalysed reaction is adenosine(2503) in 23S rRNA + 2 reduced [2Fe-2S]-[ferredoxin] + 2 S-adenosyl-L-methionine = 2-methyladenosine(2503) in 23S rRNA + 5'-deoxyadenosine + L-methionine + 2 oxidized [2Fe-2S]-[ferredoxin] + S-adenosyl-L-homocysteine. It carries out the reaction adenosine(37) in tRNA + 2 reduced [2Fe-2S]-[ferredoxin] + 2 S-adenosyl-L-methionine = 2-methyladenosine(37) in tRNA + 5'-deoxyadenosine + L-methionine + 2 oxidized [2Fe-2S]-[ferredoxin] + S-adenosyl-L-homocysteine. Specifically methylates position 2 of adenine 2503 in 23S rRNA and position 2 of adenine 37 in tRNAs. m2A2503 modification seems to play a crucial role in the proofreading step occurring at the peptidyl transferase center and thus would serve to optimize ribosomal fidelity. This chain is Dual-specificity RNA methyltransferase RlmN, found in Aliivibrio fischeri (strain MJ11) (Vibrio fischeri).